The primary structure comprises 533 residues: MDATAFHPSLWGDFFVKYKPPTAPKRGHMTERAELLKEEVRKTLKAAANQITNALDLIITLQRLGLDHHYENEISELLRFVYSSSDYDDKDLYVVSLRFYLLRKHGHCVSSDVFTSFKDEEGNFVVDDTKCLLSLYNAAYVRTHGEKVLDEAITFTRRQLEASLLDPLEPALADEVHLTLQTPLFRRLRILEAINYIPIYGKEAGRNEAILELAKLNFNLAQLIYCEELKEVTLWWKQLNVETNLSFIRDRIVECHFWMTGACCEPQYSLSRVIATKMTALITVLDDMMDTYSTTEEAMLLAEAIYRWEENAAELLPRYMKDFYLYLLKTIDSCGDELGPNRSFRTFYLKEMLKVLVRGSSQEIKWRNENYVPKTISEHLEHSGPTVGAFQVACSSFVGMGDSITKESFEWLLTYPELAKSLMNISRLLNDTASTKREQNAGQHVSTVQCYMLKHGTTMDEACEKIKELTEDSWKDMMELYLTPTEHPKLIAQTIVDFARTADYMYKETDGFTFSHTIKDMIAKLFVDPISLF.

Residues Asp286 and Asp290 each contribute to the Mg(2+) site. Substrate is bound by residues Asp286, Asp290, Arg427, and Asn430. The short motif at 286–290 (DDMMD) is the DDXXD motif element. 2 residues coordinate Mg(2+): Asn430 and Glu438.

It belongs to the terpene synthase family. In terms of assembly, monomer. Mg(2+) serves as cofactor. The cofactor is Mn(2+).

The protein resides in the cytoplasm. The enzyme catalyses (2E,6E)-farnesyl diphosphate = (E)-beta-farnesene + diphosphate. The catalysed reaction is (2E,6E)-farnesyl diphosphate = alpha-copaene + diphosphate. It carries out the reaction (2E,6E)-farnesyl diphosphate = (1S,5S,6R)-alpha-bergamotene + diphosphate. It catalyses the reaction (2E,6E)-farnesyl diphosphate = (-)-(E)-beta-caryophyllene + diphosphate. The enzyme catalyses (2E,6E)-farnesyl diphosphate = delta-cadinene + diphosphate. The catalysed reaction is (2E,6E)-farnesyl diphosphate = (+)-germacrene D + diphosphate. It carries out the reaction (2E,6E)-farnesyl diphosphate = alpha-zingiberene + diphosphate. It catalyses the reaction (2E,6E)-farnesyl diphosphate = alpha-muurolene + diphosphate. The enzyme catalyses (2E,6E)-farnesyl diphosphate = (S)-beta-bisabolene + diphosphate. The catalysed reaction is (2E,6E)-farnesyl diphosphate = beta-sesquiphellandrene + diphosphate. It carries out the reaction (2E,6E)-farnesyl diphosphate = sesquisabinene A + diphosphate. It participates in secondary metabolite biosynthesis; terpenoid biosynthesis. In terms of biological role, sesquiterpene cyclase catalyzing mainly the production of beta-farnesene and alpha-bergamotene in equal amounts from farnesyl diphosphate. Also mediates the biosynthesis of minor sesquiterpene hydrocarbons including alpha-muurolene, beta-bisabolene, zingiberene, sesquiphellandrene, sesquisabinene A, germacrene D, delta-cadinene, alpha-copaene and (E)-beta-caryophyllene. Involved in indirect defense by producing volatile signals attracting natural enemies of herbivores. The polypeptide is (E)-beta-farnesene synthase (Zea mays (Maize)).